A 420-amino-acid polypeptide reads, in one-letter code: Pyridinium-3,5-bisthiocarboxylic acid mononucleotide nickel insertion protein (420 aa).

The protein belongs to the LarC family.

The catalysed reaction is Ni(II)-pyridinium-3,5-bisthiocarboxylate mononucleotide = pyridinium-3,5-bisthiocarboxylate mononucleotide + Ni(2+). Functionally, involved in the biosynthesis of a nickel-pincer cofactor ((SCS)Ni(II) pincer complex). Binds Ni(2+), and functions in nickel delivery to pyridinium-3,5-bisthiocarboxylic acid mononucleotide (P2TMN), to form the mature cofactor. Is required for the activation of the lactate racemase LarA. May also be involved in the activation of other nickel-pincer cofactor-dependent enzymes. The protein is Pyridinium-3,5-bisthiocarboxylic acid mononucleotide nickel insertion protein of Lactiplantibacillus plantarum (strain ATCC BAA-793 / NCIMB 8826 / WCFS1) (Lactobacillus plantarum).